Here is a 596-residue protein sequence, read N- to C-terminus: CRISPR-associated DNA-binding protein Cas12m (596 aa).

Positions 19-53 are recognition domain (REC1-N); sequence EVLRQQLWLAHNLREDLVSLQLAYDDDLKAIWSSY. The tract at residues 54-121 is recognition domain (REC2); the sequence is PDVAQAEDTM…RDAIAVVKDD (68 aa). 2 coiled-coil regions span residues 55–83 and 91–117; these read DVAQAEDTMAAAEADAVALSERVKQARIE and TELTQQLRDAKKRLKDARQARRDAIAV. The segment at 122–190 is recognition domain (REC1-C); it reads AAERRKARSD…LRHHRFDGSG (69 aa). The segment at 191–302 is wedge domain (WED); it reads TIAVQLQRQA…RAKLCVTARI (112 aa). The interval 303–313 is linker; the sequence is GDTEPVTSGPT. Positions 314–541 are ruvC-I; sequence VALHLGWRST…RDGVPVTIVA (228 aa). Residue histidine 317 coordinates Mg(2+). Positions 541 to 577 are target nucleic-acid binding (TNB); that stretch reads AAADFTRTHSRCGHVNPADDRYLSNPVRCDGCGAMYD. Zn(2+) contacts are provided by histidine 549, cysteine 552, cysteine 569, and cysteine 572. Residues 578–596 form a ruvC-II region; that stretch reads QDRSFVTLMLRAATAPSNP. Residue aspartate 579 participates in Mg(2+) binding.

This sequence belongs to the CRISPR-associated DNA-binding protein Cas12m family. As to quaternary structure, binds crRNA and target dsDNA as a monomer. The cofactor is Mg(2+). Zn(2+) is required as a cofactor.

Its function is as follows. CRISPR (clustered regularly interspaced short palindromic repeat), is an adaptive immune system that provides protection against mobile genetic elements (viruses, transposable elements and conjugative plasmids). CRISPR clusters contain sequences complementary to antecedent mobile elements and target invading nucleic acids. CRISPR clusters are transcribed and processed into CRISPR RNA (crRNA). Recognizes a short motif in the CRISPR repeat sequences (the 5' PAM or protospacer adjacent motif, 5'-TTN-3' in this organism) to help distinguish self versus nonself, as targets within the bacterial CRISPR locus do not have PAMs. Upon expression in E.coli as a CRISPR locus inhibits plasmid propagation when targeted to regions essential for plasmid propagation (replication origin and dnaA). The crRNA-Cas12m complex inhibits transcription from target DNA leading to gene silencing. Cas12m-crRNA binds DNA in a PAM-dependent, crRNA-guided fashion. Binds a 17-bp crRNA-ss-target DNA heteroduplex, in a 56 nucleotide crRNA. No dsDNA, ssDNA or RNA nuclease activity is seen for the crRNA-Cas12m complex. Is required to process pre-crRNA to mature crRNA without a tracrRNA. Upon expression in E.coli as a CRISPR region preferentially binds to its associated crRNA. The polypeptide is CRISPR-associated DNA-binding protein Cas12m (Mycolicibacterium mucogenicum (Mycobacterium mucogenicum)).